The sequence spans 23 residues: Paralytic peptide 1 (23 aa).

C7 and C19 form a disulfide bridge.

It belongs to the GBP/PSP1/paralytic peptide family. As to expression, hemolymph.

Its function is as follows. Causes rapid, rigid paralysis when injected into Lepidopteran larvae. The physiological role may be to reduce hemolymph loss following injury and promote wound healing. In Manduca sexta (Tobacco hawkmoth), this protein is Paralytic peptide 1.